Consider the following 333-residue polypeptide: MISLESQVLERHLPLFADKSVLLAGGVNDDFPQKIQSQCRSVKIWSWYFDYVNQIQGKSAVDFSVIFTGRADLIVYYWTKNKQEVQFQLMQLLANAPVGQEVLIIGENRSGVRSAEKMLAHFGDIGKIDSARRCGLYHFTLQKQPNFELENFWKTYRSPQLGELIVYSLPGVFSANELDVGTQLLLSTVKDNIRGDVLDLGCGAGVIGSMIKLKNPPAKVTMTDIHAMALASAERTLLENKLSGQVLASDVFSHVEGKFDLIISNPPFHDGIDTAYRAVRELISNAKWHLVPGGELRIVANAFLPYPDLLDEYFGGHKVLAQTNKFKVYSVIG.

It belongs to the methyltransferase superfamily. RsmC family. Monomer.

It is found in the cytoplasm. The catalysed reaction is guanosine(1207) in 16S rRNA + S-adenosyl-L-methionine = N(2)-methylguanosine(1207) in 16S rRNA + S-adenosyl-L-homocysteine + H(+). Functionally, specifically methylates the guanine in position 1207 of 16S rRNA in the 30S particle. The chain is Ribosomal RNA small subunit methyltransferase C from Mannheimia succiniciproducens (strain KCTC 0769BP / MBEL55E).